Consider the following 383-residue polypeptide: 1-deoxy-D-xylulose 5-phosphate reductoisomerase (383 aa).

NADPH-binding residues include Thr-10, Gly-11, Ser-12, Ile-13, Gly-36, Lys-37, Asn-38, and Asn-122. Lys-123 lines the 1-deoxy-D-xylulose 5-phosphate pocket. Glu-124 serves as a coordination point for NADPH. Asp-148 provides a ligand contact to Mn(2+). Residues Ser-149, Glu-150, Ser-174, and His-197 each coordinate 1-deoxy-D-xylulose 5-phosphate. Glu-150 lines the Mn(2+) pocket. Gly-203 is an NADPH binding site. The 1-deoxy-D-xylulose 5-phosphate site is built by Ser-210, Asn-215, Lys-216, and Glu-219. Glu-219 serves as a coordination point for Mn(2+).

This sequence belongs to the DXR family. Mg(2+) serves as cofactor. Mn(2+) is required as a cofactor.

The enzyme catalyses 2-C-methyl-D-erythritol 4-phosphate + NADP(+) = 1-deoxy-D-xylulose 5-phosphate + NADPH + H(+). It functions in the pathway isoprenoid biosynthesis; isopentenyl diphosphate biosynthesis via DXP pathway; isopentenyl diphosphate from 1-deoxy-D-xylulose 5-phosphate: step 1/6. Its function is as follows. Catalyzes the NADPH-dependent rearrangement and reduction of 1-deoxy-D-xylulose-5-phosphate (DXP) to 2-C-methyl-D-erythritol 4-phosphate (MEP). The polypeptide is 1-deoxy-D-xylulose 5-phosphate reductoisomerase (Bacillus licheniformis (strain ATCC 14580 / DSM 13 / JCM 2505 / CCUG 7422 / NBRC 12200 / NCIMB 9375 / NCTC 10341 / NRRL NRS-1264 / Gibson 46)).